A 270-amino-acid chain; its full sequence is Shikimate dehydrogenase (NADP(+)) (270 aa).

Residues 15 to 17 and threonine 62 contribute to the shikimate site; that span reads SKS. Lysine 66 functions as the Proton acceptor in the catalytic mechanism. Aspartate 78 is a binding site for NADP(+). Shikimate is bound by residues asparagine 87 and aspartate 103. NADP(+)-binding positions include 128–132, 152–157, and leucine 213; these read GAGGA and NRTVDR. Position 215 (tyrosine 215) interacts with shikimate. Glycine 237 provides a ligand contact to NADP(+).

This sequence belongs to the shikimate dehydrogenase family. As to quaternary structure, homodimer.

It catalyses the reaction shikimate + NADP(+) = 3-dehydroshikimate + NADPH + H(+). The protein operates within metabolic intermediate biosynthesis; chorismate biosynthesis; chorismate from D-erythrose 4-phosphate and phosphoenolpyruvate: step 4/7. Functionally, involved in the biosynthesis of the chorismate, which leads to the biosynthesis of aromatic amino acids. Catalyzes the reversible NADPH linked reduction of 3-dehydroshikimate (DHSA) to yield shikimate (SA). In Halorhodospira halophila (strain DSM 244 / SL1) (Ectothiorhodospira halophila (strain DSM 244 / SL1)), this protein is Shikimate dehydrogenase (NADP(+)).